Consider the following 452-residue polypeptide: Bifunctional protein GlmU (452 aa).

The segment at 1–231 (MSRTCLAVIL…EAELAGCNNR (231 aa)) is pyrophosphorylase. Residues 10 to 13 (LAAG), Lys-24, Gln-77, 82 to 83 (GT), 105 to 107 (YGD), Gly-143, Glu-157, Asn-172, and Asn-229 contribute to the UDP-N-acetyl-alpha-D-glucosamine site. Residue Asp-107 coordinates Mg(2+). Asn-229 contacts Mg(2+). Residues 232 to 252 (AELAVIEKLWQERRRHELMLS) are linker. Residues 253-452 (GVSMIAPETV…MAIKAFSGKV (200 aa)) form an N-acetyltransferase region. Residues Arg-318 and Lys-336 each coordinate UDP-N-acetyl-alpha-D-glucosamine. His-348 (proton acceptor) is an active-site residue. Positions 351 and 362 each coordinate UDP-N-acetyl-alpha-D-glucosamine. Acetyl-CoA is bound by residues Ala-365, 371-372 (NY), Ser-390, Ser-408, and Arg-425.

It in the N-terminal section; belongs to the N-acetylglucosamine-1-phosphate uridyltransferase family. The protein in the C-terminal section; belongs to the transferase hexapeptide repeat family. As to quaternary structure, homotrimer. Mg(2+) is required as a cofactor.

The protein resides in the cytoplasm. It carries out the reaction alpha-D-glucosamine 1-phosphate + acetyl-CoA = N-acetyl-alpha-D-glucosamine 1-phosphate + CoA + H(+). The enzyme catalyses N-acetyl-alpha-D-glucosamine 1-phosphate + UTP + H(+) = UDP-N-acetyl-alpha-D-glucosamine + diphosphate. The protein operates within nucleotide-sugar biosynthesis; UDP-N-acetyl-alpha-D-glucosamine biosynthesis; N-acetyl-alpha-D-glucosamine 1-phosphate from alpha-D-glucosamine 6-phosphate (route II): step 2/2. Its pathway is nucleotide-sugar biosynthesis; UDP-N-acetyl-alpha-D-glucosamine biosynthesis; UDP-N-acetyl-alpha-D-glucosamine from N-acetyl-alpha-D-glucosamine 1-phosphate: step 1/1. It functions in the pathway bacterial outer membrane biogenesis; LPS lipid A biosynthesis. In terms of biological role, catalyzes the last two sequential reactions in the de novo biosynthetic pathway for UDP-N-acetylglucosamine (UDP-GlcNAc). The C-terminal domain catalyzes the transfer of acetyl group from acetyl coenzyme A to glucosamine-1-phosphate (GlcN-1-P) to produce N-acetylglucosamine-1-phosphate (GlcNAc-1-P), which is converted into UDP-GlcNAc by the transfer of uridine 5-monophosphate (from uridine 5-triphosphate), a reaction catalyzed by the N-terminal domain. The polypeptide is Bifunctional protein GlmU (Allorhizobium ampelinum (strain ATCC BAA-846 / DSM 112012 / S4) (Agrobacterium vitis (strain S4))).